The chain runs to 356 residues: Tricetin 3',4',5'-O-trimethyltransferase (356 aa).

Residue 123-129 participates in substrate binding; that stretch reads MNQDKVL. A substrate binding region spans residues 155-173; the sequence is AFEYHGTDPRFNRVFNEGM. 5 residues coordinate S-adenosyl-L-methionine: Gly201, Asp224, Asp244, Met245, and Lys258. Catalysis depends on His262, which acts as the Proton acceptor.

This sequence belongs to the class I-like SAM-binding methyltransferase superfamily. Cation-independent O-methyltransferase family. COMT subfamily. In terms of assembly, homodimer. The monomer is fully active and dimerization is not required for sequential methylation. As to expression, expressed in roots, stems and leaves.

The enzyme catalyses tricetin + 3 S-adenosyl-L-methionine = 3',4',5'-O-trimethyltricetin + 3 S-adenosyl-L-homocysteine + 3 H(+). Functionally, flavonoid B-ring-specific O-methyltransferase with a preference for flavones &gt; dihydroflavones &gt; flavonols that possess at least two B-ring hydroxyl groups. Active with tricetin, 5-hydroxyferulic acid, luteolin, quercitin, eriodictyol, quercetagetin, taxifolin, gossypetin and myricetin. No activity with naringenin, apigenin, kaempferol, 7,8-dihydroxy- or 5,7,8-trihydroxy flavones, chlorogenic acid, gallic acid or daphnetin. Catalyzes the sequential O-methylation of tricetin via 3'-O-methyltricetin, 3',5'-O-methyltricetin to 3',4',5'-O-trimethyltricetin. May also be involved in S lignin biosynthesis. This is Tricetin 3',4',5'-O-trimethyltransferase (OMT2) from Triticum aestivum (Wheat).